The chain runs to 187 residues: Elongation factor P (187 aa).

Belongs to the elongation factor P family.

It is found in the cytoplasm. The protein operates within protein biosynthesis; polypeptide chain elongation. Its function is as follows. Involved in peptide bond synthesis. Stimulates efficient translation and peptide-bond synthesis on native or reconstituted 70S ribosomes in vitro. Probably functions indirectly by altering the affinity of the ribosome for aminoacyl-tRNA, thus increasing their reactivity as acceptors for peptidyl transferase. The polypeptide is Elongation factor P (Corynebacterium diphtheriae (strain ATCC 700971 / NCTC 13129 / Biotype gravis)).